A 548-amino-acid chain; its full sequence is Probable 2,3-bisphosphoglycerate-independent phosphoglycerate mutase (548 aa).

The Mn(2+) site is built by Asp-20 and Ser-73. Ser-73 functions as the Phosphoserine intermediate in the catalytic mechanism. Substrate contacts are provided by residues His-134, 164–165, Arg-200, Arg-207, 279–282, and Lys-354; these read RD and RGDR. Asp-422, His-426, Asp-463, His-464, and His-493 together coordinate Mn(2+).

The protein belongs to the BPG-independent phosphoglycerate mutase family. Monomer. Requires Mn(2+) as cofactor.

The enzyme catalyses (2R)-2-phosphoglycerate = (2R)-3-phosphoglycerate. It participates in carbohydrate degradation; glycolysis; pyruvate from D-glyceraldehyde 3-phosphate: step 3/5. In terms of biological role, catalyzes the interconversion of 2-phosphoglycerate and 3-phosphoglycerate. In Leptospira interrogans serogroup Icterohaemorrhagiae serovar Lai (strain 56601), this protein is Probable 2,3-bisphosphoglycerate-independent phosphoglycerate mutase (gpmI).